A 471-amino-acid chain; its full sequence is Mixed lineage kinase domain-like protein (471 aa).

An N-terminal bundle and brace (NBB); mediates INSP6 binding region spans residues 1 to 149 (MENLKHIITL…DADEDRRAFQ (149 aa)). A coiled-coil region spans residues 55–84 (SEKLTTAMNRFKAALEEANGEIEKFSNRSN). Position 125 is a phosphoserine (S125). The stretch at 139–180 (QDADEDRRAFQMLRRDNEKIEASLRRLEINMKEIKETLRQYL) forms a coiled coil. The region spanning 194-469 (KEIKKEQLSG…DEILKKLSTF (276 aa)) is the Protein kinase domain. ATP contacts are provided by residues 209–217 (LRENEVSTL) and K230. At T357 the chain carries Phosphothreonine; by RIPK3. Residues S358 and S360 each carry the phosphoserine; by RIPK3 modification.

The protein belongs to the protein kinase superfamily. As to quaternary structure, homooligomer. Homotrimer; forms homotrimers on necroptosis induction. Upon TNF-induced necrosis, forms in complex with PGAM5, RIPK1 and RIPK3. Within this complex, may play a role in the proper targeting of RIPK1-RIPK3 to its downstream effector PGAM5. Interacts with RIPK3; the interaction is direct and promotes its phosphorylation and subsequent activation. In terms of processing, phosphorylation by RIPK3 induces a conformational switch that is required for necroptosis. It also induces homotrimerization and localization to the plasma membrane.

Its subcellular location is the cytoplasm. It localises to the cell membrane. It is found in the nucleus. Activated via binding to highly phosphorylated inositol phosphates such as inositolhexakisphosphate (InsP6) which mediates the release of an N-terminal auto-inhibitory region. Activation requires not only RIPK3-dependent phosphorylation but also binding to highly phosphorylated inositol phosphates. Inhibited by necrosulfonamide, a specific inhibitor of necroptosis that targets Cys-86. Pseudokinase that plays a key role in TNF-induced necroptosis, a programmed cell death process. Does not have protein kinase activity. Activated following phosphorylation by RIPK3, leading to homotrimerization, localization to the plasma membrane and execution of programmed necrosis characterized by calcium influx and plasma membrane damage. In addition to TNF-induced necroptosis, necroptosis can also take place in the nucleus in response to orthomyxoviruses infection: following activation by ZBP1, MLKL is phosphorylated by RIPK3 in the nucleus, triggering disruption of the nuclear envelope and leakage of cellular DNA into the cytosol.following ZBP1 activation, which senses double-stranded Z-RNA structures, nuclear RIPK3 catalyzes phosphorylation and activation of MLKL, promoting disruption of the nuclear envelope and leakage of cellular DNA into the cytosol. Binds to highly phosphorylated inositol phosphates such as inositolhexakisphosphate (InsP6) which is essential for its necroptotic function. In Homo sapiens (Human), this protein is Mixed lineage kinase domain-like protein.